Here is a 177-residue protein sequence, read N- to C-terminus: Large ribosomal subunit protein uL6 (177 aa).

The protein belongs to the universal ribosomal protein uL6 family. In terms of assembly, part of the 50S ribosomal subunit.

Functionally, this protein binds to the 23S rRNA, and is important in its secondary structure. It is located near the subunit interface in the base of the L7/L12 stalk, and near the tRNA binding site of the peptidyltransferase center. The protein is Large ribosomal subunit protein uL6 of Methanosarcina barkeri (strain Fusaro / DSM 804).